Consider the following 127-residue polypeptide: Class I hydrophobin 1 (127 aa).

A signal peptide spans 1 to 20; that stretch reads MLSLLSKAVSLAILVTAVVA. Disulfide bonds link Cys53-Cys108, Cys60-Cys102, Cys61-Cys94, and Cys109-Cys122. A glycan (N-linked (GlcNAc...) asparagine) is linked at Asn66.

It belongs to the fungal hydrophobin family. In terms of assembly, self-assembles to form functional amyloid fibrils called rodlets. Self-assembly into fibrillar rodlets occurs spontaneously at hydrophobic:hydrophilic interfaces and the rodlets further associate laterally to form amphipathic monolayers. In terms of tissue distribution, expressed everywhere in the mycelial tissues of developing fruiting bodies except for the top parts of the pileus (cap) and for the prehymenophore; but high level of the transcript is detected in the parts surrounding the prehymenophore.

The protein resides in the secreted. It is found in the cell wall. Functionally, aerial growth, conidiation, and dispersal of filamentous fungi in the environment rely upon a capability of their secreting small amphipathic proteins called hydrophobins (HPBs) with low sequence identity. Class I can self-assemble into an outermost layer of rodlet bundles on aerial cell surfaces, conferring cellular hydrophobicity that supports fungal growth, development and dispersal; whereas Class II form highly ordered films at water-air interfaces through intermolecular interactions but contribute nothing to the rodlet structure. Hyd1 is a class I hydrophobin that plays a role in fruiting body initiation rather than in mature fruit body maintenance. Seems to be involved in the formation in the extracellular matrix of lined air channels with a hydrophobic membrane. These channels may help to provide gas exchange during respiration in mycelial tissues of developing fruiting bodies and are formed all over the mycelial tissues of these developing fruiting bodies except for the top parts of the pileus (cap) and for the prehymenophore. This is Class I hydrophobin 1 from Lentinula edodes (Shiitake mushroom).